Here is a 420-residue protein sequence, read N- to C-terminus: UDP-N-acetylglucosamine 1-carboxyvinyltransferase (420 aa).

22–23 (KN) is a phosphoenolpyruvate binding site. Arg-93 serves as a coordination point for UDP-N-acetyl-alpha-D-glucosamine. Catalysis depends on Cys-117, which acts as the Proton donor. Position 117 is a 2-(S-cysteinyl)pyruvic acid O-phosphothioketal (Cys-117). 2 residues coordinate UDP-N-acetyl-alpha-D-glucosamine: Asp-307 and Ile-329.

It belongs to the EPSP synthase family. MurA subfamily.

The protein resides in the cytoplasm. It catalyses the reaction phosphoenolpyruvate + UDP-N-acetyl-alpha-D-glucosamine = UDP-N-acetyl-3-O-(1-carboxyvinyl)-alpha-D-glucosamine + phosphate. It participates in cell wall biogenesis; peptidoglycan biosynthesis. Its function is as follows. Cell wall formation. Adds enolpyruvyl to UDP-N-acetylglucosamine. The sequence is that of UDP-N-acetylglucosamine 1-carboxyvinyltransferase from Cellvibrio japonicus (strain Ueda107) (Pseudomonas fluorescens subsp. cellulosa).